Consider the following 288-residue polypeptide: Diaminopimelate epimerase (288 aa).

Positions 13, 46, and 66 each coordinate substrate. Cys-75 serves as the catalytic Proton donor. Substrate contacts are provided by residues 76–77 (GN), Asn-166, Asn-199, and 217–218 (ER). Cys-226 acts as the Proton acceptor in catalysis. Residue 227–228 (GT) participates in substrate binding.

This sequence belongs to the diaminopimelate epimerase family. Homodimer.

Its subcellular location is the cytoplasm. The catalysed reaction is (2S,6S)-2,6-diaminopimelate = meso-2,6-diaminopimelate. The protein operates within amino-acid biosynthesis; L-lysine biosynthesis via DAP pathway; DL-2,6-diaminopimelate from LL-2,6-diaminopimelate: step 1/1. Its function is as follows. Catalyzes the stereoinversion of LL-2,6-diaminopimelate (L,L-DAP) to meso-diaminopimelate (meso-DAP), a precursor of L-lysine and an essential component of the bacterial peptidoglycan. The chain is Diaminopimelate epimerase from Cupriavidus taiwanensis (strain DSM 17343 / BCRC 17206 / CCUG 44338 / CIP 107171 / LMG 19424 / R1) (Ralstonia taiwanensis (strain LMG 19424)).